Reading from the N-terminus, the 393-residue chain is Pre-mRNA-splicing regulator WTAP (393 aa).

Residues 240–393 are disordered; that stretch reads QQQIQTSGNR…SSVNVQGSVL (154 aa). The span at 254-267 shows a compositional bias: basic and acidic residues; sequence ESKDEGETSGKDCG. Polar residues predominate over residues 272–286; that stretch reads GPSNGGSSHQRTHSS. A compositionally biased stretch (basic and acidic residues) spans 310-319; sequence LPNHSEERTS. Polar residues predominate over residues 320–353; that stretch reads RGGSSYMNQLSTGYESVDSPTGSENSLTHQSNDT. Positions 354–365 are enriched in basic and acidic residues; it reads DSNHDSQEEKPV. The span at 369–393 shows a compositional bias: polar residues; that stretch reads GNRTVSSRHLQNGLDSSVNVQGSVL.

Belongs to the fl(2)d family. As to quaternary structure, component of the WMM complex, a N6-methyltransferase complex composed of a catalytic subcomplex, named MAC, and of an associated subcomplex, named MACOM. Component of the MACOM subcomplex.

It localises to the nucleus speckle. The protein resides in the nucleus. It is found in the nucleoplasm. Associated component of the WMM complex, a complex that mediates N6-methyladenosine (m6A) methylation of RNAs, a modification that plays a role in the efficiency of mRNA splicing and RNA processing. This chain is Pre-mRNA-splicing regulator WTAP, found in Xenopus tropicalis (Western clawed frog).